A 374-amino-acid chain; its full sequence is Acid phosphatase-like protein XcAP-1 (374 aa).

An N-terminal signal peptide occupies residues threonine 1–alanine 17. Serotonin is bound at residue valine 25. Disulfide bonds link cysteine 144-cysteine 372, cysteine 165-cysteine 219, and cysteine 345-cysteine 349. Aspartate 245, aspartate 249, asparagine 271, and glutamine 283 together coordinate serotonin.

The protein belongs to the histidine acid phosphatase family.

Its subcellular location is the secreted. Its function is as follows. Probably modulates blood feeding of fleas on vertebrate species by binding and sequestering different mediators involved in the host response. Binds biogenic amines: serotonin, adrenaline and noradrenaline. Binds leukotriene C4. Does not bind histamine, leukotriene B4, leukotriene D4, leukotriene E4, ADP, and stable analogs of thromboxane A2: U-46619 and cTXA2. This is Acid phosphatase-like protein XcAP-1 from Xenopsylla cheopis (Oriental rat flea).